A 122-amino-acid polypeptide reads, in one-letter code: MQNLSILLVCSFCILGHVSSAGIRIGNELKNKKLLWMRCYSKDDVIGPLIIPIGGHRFNYFGTNIFATTRFMCTLRQGPNYRHHQNFTAFKLYSASDDGGVWDWRAREDGIYLKIKAERGVN.

An N-terminal signal peptide occupies residues 1 to 20; the sequence is MQNLSILLVCSFCILGHVSS. Asparagine 86 carries an N-linked (GlcNAc...) asparagine glycan.

The protein belongs to the plant self-incompatibility (S1) protein family.

It is found in the secreted. This Arabidopsis thaliana (Mouse-ear cress) protein is S-protein homolog 23.